A 548-amino-acid polypeptide reads, in one-letter code: MAGLRARRGPAPGLLALSALGFCLMLQVSAKRLPKTPPCPPSCSCTRDTAFCVDSKAVPRNLPSEVISLTLVNAAFSEIHDGAFSHLPLLQFLLLNSNKFTLIGDNAFTGLSHLQYLFIENNDIWTLSKFTFRGLKSLTHLSLANNNLQTLPRDIFRPLDILNDLDLRGNSLNCDCKVKWLVEWLAHTNTTVAPIYCASPPRFQEHKVQDLPLREFDCITTDFVLYQTLSFPAVSAEPFLYSSDLYLALAQPGVSACTILKWDYVERQLRDYDRIPAPSAVHCKPMVVDSQLYVVVAQLFGGSYIYHWDPNTTRFTKLQDIDPQRVRKPNDLEAFRIDGDWYFAVADSSKAGATSLYRWHQNGFYSHQALHPWHRDTDLEFVDGEGKPRLIVSNSSQAPVIYQWSRTQKQFVAQGEVTQVPDAQAVKHFRAGRDSYLCLSRYIGDSKILRWEGTRFSEVQALPSRGSLALQPFLVGGRRYLALGSDFSFTQIYQWDEGRQKFVRFQELAVQAPRAFCYMPAGDAQLLLAPSFKGQTLVYRHVVVDLSA.

The signal sequence occupies residues 1 to 30; the sequence is MAGLRARRGPAPGLLALSALGFCLMLQVSA. The LRRNT domain occupies 31 to 64; it reads KRLPKTPPCPPSCSCTRDTAFCVDSKAVPRNLPS. LRR repeat units follow at residues 89 to 110, 113 to 134, and 137 to 158; these read LLQF…AFTG, HLQY…TFRG, and SLTH…IFRP. The 51-residue stretch at 170 to 220 folds into the LRRCT domain; the sequence is NSLNCDCKVKWLVEWLAHTNTTVAPIYCASPPRFQEHKVQDLPLREFDCIT. N-linked (GlcNAc...) asparagine glycosylation is present at asparagine 189. EAR repeat units follow at residues 222–264 and 268–310; these read DFVL…KWDY and QLRD…HWDP. The N-linked (GlcNAc...) asparagine glycan is linked to asparagine 311. 5 EAR repeats span residues 314–361, 363–406, 410–453, 455–497, and 501–543; these read RFTK…RWHQ, GFYS…QWSR, QFVA…RWEG, RFSE…QWDE, and KFVR…RHVV. A glycan (N-linked (GlcNAc...) asparagine) is linked at asparagine 394.

Interacts with STX1A.

Its subcellular location is the secreted. It localises to the cytoplasmic vesicle. The protein localises to the secretory vesicle. It is found in the synaptic vesicle. The protein resides in the synapse. Its subcellular location is the synaptosome. May participate in the regulation of neuronal exocytosis. This is Leucine-rich repeat LGI family member 3 (LGI3) from Macaca fascicularis (Crab-eating macaque).